Here is a 327-residue protein sequence, read N- to C-terminus: Tartrate-resistant acid phosphatase type 5 (327 aa).

Residues 1 to 22 form the signal peptide; that stretch reads MDSWVVLLGLQIIWLPLLTHGT. Residues aspartate 35, aspartate 73, tyrosine 76, and asparagine 112 each coordinate Fe cation. 2 N-linked (GlcNAc...) asparagine glycosylation sites follow: asparagine 118 and asparagine 149. Residues cysteine 163 and cysteine 221 are joined by a disulfide bond. Residues histidine 207, histidine 242, and histidine 244 each coordinate Fe cation.

In terms of assembly, exists either as monomer or, after proteolytic processing, as a dimer of two chains linked by disulfide bond(s). Fe cation serves as cofactor. Characteristic constituent of osteoclasts.

It is found in the lysosome. It catalyses the reaction a phosphate monoester + H2O = an alcohol + phosphate. Functionally, may play a role in the process of bone resorption. The osteoclastic trap acts on nucleotide tri- and diphosphates with higher affinity, compared with other substrates. The protein is Tartrate-resistant acid phosphatase type 5 (Acp5) of Mus musculus (Mouse).